The primary structure comprises 457 residues: Reticulophagy regulator 3 (457 aa).

Residues 1–24 are disordered; sequence MAQRVGEEEQGASGLRRRRSGARC. The next 3 helical transmembrane spans lie at 80–100, 165–185, and 186–206; these read FFALTSLRIIFLVAFGLMIII, PGKFCLLACSFLTFLAVLGGY, and IPGVVLSYLLLLFLLLWPLAI. The segment covering 291–305 has biased composition (polar residues); the sequence is ENGTFNLSRGQTPLT. Disordered stretches follow at residues 291–351 and 410–457; these read ENGT…IPST and AYAE…HSHQ. Basic and acidic residues predominate over residues 310 to 326; it reads DLDRHSDPEESFARDLP. A compositionally biased stretch (acidic residues) spans 428–441; that stretch reads LDTDAEADDFELLD. An LIR motif motif is present at residues 435–440; sequence DDFELL. A compositionally biased stretch (polar residues) spans 443 to 457; it reads SELSQMDPSSSHSHQ.

The protein belongs to the RETREG family. Interacts with ATG8 family modifier proteins.

It is found in the endoplasmic reticulum membrane. Endoplasmic reticulum (ER)-anchored autophagy regulator which exists in an inactive state under basal conditions but is activated following cellular stress. When activated, induces ER fragmentation and mediates ER delivery into lysosomes through sequestration into autophagosomes via interaction with ATG8 family proteins. Promotes ER membrane curvature and ER tubulation required for subsequent ER fragmentation and engulfment into autophagosomes. This Xenopus tropicalis (Western clawed frog) protein is Reticulophagy regulator 3 (retreg3).